We begin with the raw amino-acid sequence, 324 residues long: Deoxyhypusine hydroxylase (324 aa).

HEAT-like PBS-type repeat units lie at residues 60 to 86 and 94 to 119; these read LKHE…VLED and RHEA…YLHR. Fe cation is bound by residues histidine 62, glutamate 63, histidine 95, and glutamate 96. Basic and acidic residues predominate over residues 143–152; the sequence is EERKQEKLRQ. A disordered region spans residues 143 to 171; the sequence is EERKQEKLRQSDFASVDPAPPMPEDDEKQ. 3 HEAT-like PBS-type repeats span residues 189 to 219, 227 to 253, and 260 to 287; these read KRYR…LAKG, FRHE…ALSN, and VRHE…FLHD. The Fe cation site is built by histidine 229, glutamate 230, histidine 262, and glutamate 263.

It belongs to the deoxyhypusine hydroxylase family. Fe(2+) is required as a cofactor.

The protein localises to the cytoplasm. Its subcellular location is the nucleus. It catalyses the reaction [eIF5A protein]-deoxyhypusine + AH2 + O2 = [eIF5A protein]-hypusine + A + H2O. Its pathway is protein modification; eIF5A hypusination. In terms of biological role, catalyzes the hydroxylation of the N(6)-(4-aminobutyl)-L-lysine intermediate to form hypusine, an essential post-translational modification only found in mature eIF-5A factor. The polypeptide is Deoxyhypusine hydroxylase (lia1) (Neurospora crassa (strain ATCC 24698 / 74-OR23-1A / CBS 708.71 / DSM 1257 / FGSC 987)).